A 357-amino-acid polypeptide reads, in one-letter code: LINE-1 retrotransposable element ORF1 protein (357 aa).

The disordered stretch occupies residues 1–40 (MAKGKRKNPTNRNQDHSPSSERSTPTPPSPGHPNTTENLD). Residues 59 to 156 (HKSLKDLQES…IENIDTTVKE (98 aa)) are a coiled coil. The segment at 179–274 (NLRIIGIDEN…KGRPIRITPD (96 aa)) is RNA recognition motif (RRM) domain. A C-terminal domain (CTD) region spans residues 278-339 (ETMKARRAWT…STNPALQRII (62 aa)).

This sequence belongs to the transposase 22 family. Homotrimer (via coiled coil domain). May also form larger homooligomers. Interacts with Tex19.1 and UBR2. Interacts with MOV10. Post-translationally, polyubiquitinated, probably by UBR2, which induces its degradation. As to expression, expressed in meiotic spermatocytes and in the cerebellum (at protein level).

The protein localises to the nucleus. The protein resides in the nucleolus. It is found in the cytoplasm. Its subcellular location is the cytoplasmic ribonucleoprotein granule. It localises to the stress granule. Nucleic acid-binding protein which is essential for retrotransposition of LINE-1 elements in the genome. Functions as a nucleic acid chaperone binding its own transcript and therefore preferentially mobilizing the transcript from which they are encoded. The chain is LINE-1 retrotransposable element ORF1 protein from Mus musculus (Mouse).